The chain runs to 611 residues: tRNA uridine 5-carboxymethylaminomethyl modification enzyme MnmG (611 aa).

14–19 serves as a coordination point for FAD; the sequence is GAGHAG. 274–288 contacts NAD(+); sequence GPRYCPSIEDKIVKF.

This sequence belongs to the MnmG family. In terms of assembly, homodimer. Heterotetramer of two MnmE and two MnmG subunits. FAD is required as a cofactor.

It localises to the cytoplasm. Its function is as follows. NAD-binding protein involved in the addition of a carboxymethylaminomethyl (cmnm) group at the wobble position (U34) of certain tRNAs, forming tRNA-cmnm(5)s(2)U34. This is tRNA uridine 5-carboxymethylaminomethyl modification enzyme MnmG from Chlamydia caviae (strain ATCC VR-813 / DSM 19441 / 03DC25 / GPIC) (Chlamydophila caviae).